We begin with the raw amino-acid sequence, 484 residues long: RNA polymerase sigma-54 factor 1 (484 aa).

The H-T-H motif DNA-binding region spans 355–374 (NLKAVAEAIQMHESTVSRVT). The RPON box signature appears at 444–452 (ARRTVAKYR). Positions 464 to 484 (RRDNMWSTMNSRASGGTGLDK) are disordered. Over residues 468–477 (MWSTMNSRAS) the composition is skewed to polar residues.

This sequence belongs to the sigma-54 factor family.

Its function is as follows. Sigma factors are initiation factors that promote the attachment of RNA polymerase to specific initiation sites and are then released. This sigma factor is responsible for the expression of the nitrogen fixation genes. The chain is RNA polymerase sigma-54 factor 1 (rpoN1) from Bradyrhizobium diazoefficiens (strain JCM 10833 / BCRC 13528 / IAM 13628 / NBRC 14792 / USDA 110).